We begin with the raw amino-acid sequence, 214 residues long: Protein PAM68, chloroplastic (214 aa).

Disordered stretches follow at residues 1–26 (MASV…NNKQ) and 62–111 (ATMN…ERGV). The N-terminal 35 residues, 1–35 (MASVPCSFKLSAHRRSSSKLDGNNKQCSSLVERLR), are a transit peptide targeting the chloroplast. The Stromal segment spans residues 36 to 124 (DKTKSQVPKS…IVTNRMISRM (89 aa)). Basic residues predominate over residues 75–84 (KKTKKSKKPK). Over residues 89-106 (SDEDDDDEDEDDDDEEDE) the composition is skewed to acidic residues. A helical transmembrane segment spans residues 125 to 145 (GFTVGLPLFIGLLFFPFFYYL). The Lumenal, thylakoid portion of the chain corresponds to 146–152 (KVGLKVD). The chain crosses the membrane as a helical span at residues 153 to 173 (VPTWVPFIVSFVFFGTALAGV). At 174-214 (SYGIVSSSWDPLREGSLLGWNEAKKNWPVFWQSFWNSSDKR) the chain is on the stromal side.

As to quaternary structure, interacts with the PSII subunits psbA, psbB, psbC, psbD, psbH and psbI, but not with psbE, psbF or psbO. Interacts with the PSII assembly factors HCF136, LPA1, LPA2 and ALB3.

It localises to the plastid. The protein resides in the chloroplast thylakoid membrane. In terms of biological role, involved in early steps in photosystem II (PSII) biogenesis and in maturation and stability of newly synthesized psbA protein. The chain is Protein PAM68, chloroplastic (PAM68) from Arabidopsis thaliana (Mouse-ear cress).